A 339-amino-acid chain; its full sequence is Glycerol-3-phosphate dehydrogenase [NAD(P)+] (339 aa).

NADPH contacts are provided by S15, W16, H36, and K110. Sn-glycerol 3-phosphate contacts are provided by K110, G144, and S146. NADPH is bound at residue A148. Residues K199, D252, S262, R263, and N264 each contribute to the sn-glycerol 3-phosphate site. The active-site Proton acceptor is the K199. R263 contacts NADPH. V287 and E289 together coordinate NADPH.

It belongs to the NAD-dependent glycerol-3-phosphate dehydrogenase family.

Its subcellular location is the cytoplasm. It carries out the reaction sn-glycerol 3-phosphate + NAD(+) = dihydroxyacetone phosphate + NADH + H(+). The catalysed reaction is sn-glycerol 3-phosphate + NADP(+) = dihydroxyacetone phosphate + NADPH + H(+). Its pathway is membrane lipid metabolism; glycerophospholipid metabolism. Its function is as follows. Catalyzes the reduction of the glycolytic intermediate dihydroxyacetone phosphate (DHAP) to sn-glycerol 3-phosphate (G3P), the key precursor for phospholipid synthesis. In Desulfotalea psychrophila (strain LSv54 / DSM 12343), this protein is Glycerol-3-phosphate dehydrogenase [NAD(P)+].